The sequence spans 783 residues: Protein DWD HYPERSENSITIVE TO UV-B 1 (783 aa).

2 WD repeats span residues 145–198 and 212–256; these read GEFT…LKLP and SDSS…DPSL. Positions 382-389 match the Nuclear localization signal motif; the sequence is RKKESVVR. WD repeat units follow at residues 439-480, 485-525, 538-577, 581-621, 625-664, and 666-710; these read DNSR…IFRY, GSQS…STVT, DEFD…RLQV, MHQE…SRPC, SSTK…LHLN, and EIVP…RRLR.

Interacts directly with DDB1A. Binds to COP1 and RUP1.

Its subcellular location is the nucleus. In terms of biological role, may act as a substrate receptor of a CUL4-RING E3 ubiquitin-protein ligase (CRL4) complex involved in the negative regulation of cellular responses to ultraviolet-B (UV-B) illumination, likely in coordination with RUP1. Interacts with COP1 and probably prevents the formation of active UVR8-COP1 complex, thus avoiding UVR8-COP1-mediated positive regulation of UV-B responses. This chain is Protein DWD HYPERSENSITIVE TO UV-B 1, found in Arabidopsis thaliana (Mouse-ear cress).